The sequence spans 139 residues: D-ribose pyranase (139 aa).

Residue His-20 is the Proton donor of the active site. Substrate is bound by residues Asp-28, His-106, and Tyr-128–Asn-130.

The protein belongs to the RbsD / FucU family. RbsD subfamily. In terms of assembly, homodecamer.

It localises to the cytoplasm. The enzyme catalyses beta-D-ribopyranose = beta-D-ribofuranose. It functions in the pathway carbohydrate metabolism; D-ribose degradation; D-ribose 5-phosphate from beta-D-ribopyranose: step 1/2. Its function is as follows. Catalyzes the interconversion of beta-pyran and beta-furan forms of D-ribose. This is D-ribose pyranase from Serratia proteamaculans (strain 568).